The primary structure comprises 277 residues: Ribosome-inactivating protein luffin-alpha (277 aa).

The signal sequence occupies residues 1–19 (MKRFTVLILAIFVAASTVE). Residue glutamate 179 is part of the active site.

The protein belongs to the ribosome-inactivating protein family. Type 1 RIP subfamily.

It carries out the reaction Endohydrolysis of the N-glycosidic bond at one specific adenosine on the 28S rRNA.. In Luffa aegyptiaca (Sponge gourd), this protein is Ribosome-inactivating protein luffin-alpha.